The following is a 464-amino-acid chain: Gamma-aminobutyric acid receptor subunit alpha-5 (464 aa).

Positions 1-25 are cleaved as a signal peptide; it reads MDNGMLSRFIMTKTLLVFCISMTLS. Residues 26–260 lie on the Extracellular side of the membrane; it reads SHFGFSQMPT…FHLKRKIGYF (235 aa). An N-linked (GlcNAc...) asparagine glycan is attached at Asn-45. Arg-101 contacts 4-aminobutanoate. N-linked (GlcNAc...) asparagine glycosylation occurs at Asn-145. Thr-164 provides a ligand contact to 4-aminobutanoate. Cys-173 and Cys-187 form a disulfide bridge. 2 N-linked (GlcNAc...) asparagine glycosylation sites follow: Asn-207 and Asn-236. 3 helical membrane-spanning segments follow: residues 261 to 281, 287 to 308, and 319 to 340; these read VIQTYLPCIMTVILSQVSFWL, PARTVFGVTTVLTMTTLSISAR, and AMDWFIAVCYAFVFSALIEFAT. Residues 341 to 429 are Cytoplasmic-facing; the sequence is VNYFTKRGWA…TYNSISKIDK (89 aa). Residue Lys-355 forms a Glycyl lysine isopeptide (Lys-Gly) (interchain with G-Cter in ubiquitin) linkage. Residues 382–414 are disordered; sequence KLTHPPNIPKEQLPGGTGNAVGTASIRASEEKT. The chain crosses the membrane as a helical span at residues 430–450; sequence MSRIVFPILFGTFNLVYWATY.

The protein belongs to the ligand-gated ion channel (TC 1.A.9) family. Gamma-aminobutyric acid receptor (TC 1.A.9.5) subfamily. GABRA5 sub-subfamily. As to quaternary structure, heteropentamer, formed by a combination of alpha (GABRA1-6), beta (GABRB1-3), gamma (GABRG1-3), delta (GABRD), epsilon (GABRE), rho (GABRR1-3), pi (GABRP) and theta (GABRQ) chains, each subunit exhibiting distinct physiological and pharmacological properties. Expressed in brain areas such as cerebral cortex, hippocampal formation and olfactory bulb granular layer.

The protein resides in the postsynaptic cell membrane. Its subcellular location is the cell membrane. The catalysed reaction is chloride(in) = chloride(out). With respect to regulation, allosterically potentiated by alphaxalone. Allosterically inhibited by pregnenolone sulfate. Inhibited by zinc and lanthanum. Alpha subunit of the heteropentameric ligand-gated chloride channel gated by gamma-aminobutyric acid (GABA), a major inhibitory neurotransmitter in the brain. GABA-gated chloride channels, also named GABA(A) receptors (GABAAR), consist of five subunits arranged around a central pore and contain GABA active binding site(s) located at the alpha and beta subunit interface(s). When activated by GABA, GABAARs selectively allow the flow of chloride anions across the cell membrane down their electrochemical gradient. GABAARs containing alpha-5/GABRA5 subunits are mainly extrasynaptic and contribute to the tonic GABAergic inhibition in the hippocampus. Extrasynaptic alpha-5-containing GABAARs in CA1 pyramidal neurons play a role in learning and memory processes. This Rattus norvegicus (Rat) protein is Gamma-aminobutyric acid receptor subunit alpha-5.